The chain runs to 119 residues: MKKVKEAEKKNIKRKKRIRDRIGFGVAERPRVTIFKSNKYFYAQVIDDIVGRTLASVSTIEKELSLNKNISDVKKLGEVLAKRLKDKNISKLIFDRNGYKYHGLIAGFATALREAGIDV.

It belongs to the universal ribosomal protein uL18 family. Part of the 50S ribosomal subunit; part of the 5S rRNA/L5/L18/L25 subcomplex. Contacts the 5S and 23S rRNAs.

Functionally, this is one of the proteins that bind and probably mediate the attachment of the 5S RNA into the large ribosomal subunit, where it forms part of the central protuberance. In Borrelia recurrentis (strain A1), this protein is Large ribosomal subunit protein uL18.